The chain runs to 187 residues: Peptidyl-tRNA hydrolase (187 aa).

Tyrosine 14 serves as a coordination point for tRNA. Catalysis depends on histidine 19, which acts as the Proton acceptor. 3 residues coordinate tRNA: tyrosine 60, asparagine 62, and asparagine 108.

The protein belongs to the PTH family. In terms of assembly, monomer.

Its subcellular location is the cytoplasm. The catalysed reaction is an N-acyl-L-alpha-aminoacyl-tRNA + H2O = an N-acyl-L-amino acid + a tRNA + H(+). Hydrolyzes ribosome-free peptidyl-tRNAs (with 1 or more amino acids incorporated), which drop off the ribosome during protein synthesis, or as a result of ribosome stalling. Its function is as follows. Catalyzes the release of premature peptidyl moieties from peptidyl-tRNA molecules trapped in stalled 50S ribosomal subunits, and thus maintains levels of free tRNAs and 50S ribosomes. In Mycoplasmopsis synoviae (strain 53) (Mycoplasma synoviae), this protein is Peptidyl-tRNA hydrolase.